The chain runs to 397 residues: Anhydro-N-acetylmuramic acid kinase (397 aa).

An ATP-binding site is contributed by 9–16; sequence GTSYDAID.

It belongs to the anhydro-N-acetylmuramic acid kinase family.

The enzyme catalyses 1,6-anhydro-N-acetyl-beta-muramate + ATP + H2O = N-acetyl-D-muramate 6-phosphate + ADP + H(+). It participates in amino-sugar metabolism; 1,6-anhydro-N-acetylmuramate degradation. The protein operates within cell wall biogenesis; peptidoglycan recycling. In terms of biological role, catalyzes the specific phosphorylation of 1,6-anhydro-N-acetylmuramic acid (anhMurNAc) with the simultaneous cleavage of the 1,6-anhydro ring, generating MurNAc-6-P. Is required for the utilization of anhMurNAc either imported from the medium or derived from its own cell wall murein, and thus plays a role in cell wall recycling. The polypeptide is Anhydro-N-acetylmuramic acid kinase (Rhodococcus erythropolis (strain PR4 / NBRC 100887)).